Reading from the N-terminus, the 512-residue chain is Histidine ammonia-lyase (512 aa).

The segment at residues 143–145 is a cross-link (5-imidazolinone (Cys-Gly)); it reads CSG. 2,3-didehydroalanine (Ser) is present on Ser-144.

Belongs to the PAL/histidase family. Contains an active site 4-methylidene-imidazol-5-one (MIO), which is formed autocatalytically by cyclization and dehydration of residues Cys-Ser-Gly.

It localises to the cytoplasm. It carries out the reaction L-histidine = trans-urocanate + NH4(+). It participates in amino-acid degradation; L-histidine degradation into L-glutamate; N-formimidoyl-L-glutamate from L-histidine: step 1/3. The sequence is that of Histidine ammonia-lyase from Streptomyces avermitilis (strain ATCC 31267 / DSM 46492 / JCM 5070 / NBRC 14893 / NCIMB 12804 / NRRL 8165 / MA-4680).